Consider the following 1133-residue polypeptide: Early transcription factor large subunit homolog (1133 aa).

In terms of domain architecture, Helicase ATP-binding spans 52-352 (KGGRAFFPCD…PNGQPLQRQQ (301 aa)). 99–106 (WQTGTGKS) serves as a coordination point for ATP. Positions 281-284 (DEIH) match the DEAH box motif. One can recognise a Helicase C-terminal domain in the interval 524 to 724 (MMKDILSIIR…EGDKALRKHA (201 aa)).

The protein belongs to the DEAD box helicase family. DEAH subfamily.

The protein localises to the virion. It carries out the reaction ATP + H2O = ADP + phosphate + H(+). Functionally, putative initation factor. In Ornithodoros (relapsing fever ticks), this protein is Early transcription factor large subunit homolog.